The primary structure comprises 469 residues: Phosphatidylcholine:ceramide cholinephosphotransferase 1 (469 aa).

The segment at 40-177 (TTKIGPKLET…GDKPASPHDR (138 aa)) is disordered. Basic and acidic residues-rich tracts occupy residues 72-91 (AAEKVEKQHDDDGVVVHEET), 100-117 (SHHDKQKPGETKKSGDGK), and 162-177 (VRLEMPGDKPASPHDR). 6 helical membrane passes run 186 to 206 (LVAFLMLVVAAAGNTITLSWI), 231 to 251 (LRLCENLMIGSFVSLLVLILF), 262 to 282 (LCFIGSILYGMRCITMMVTPV), 300 to 320 (TFSLIVMRGVWSMFGLGLNLF), 327 to 347 (LCGDYIYSGHTLVLVVSALFI), and 355 to 375 (FYILHWLSWLVCSVGVIFLVL). The active site involves His-336. The Cytoplasmic segment spans residues 376-469 (SHGHYTIDVI…RNGAARPAFE (94 aa)). Active-site residues include His-379 and Asp-383.

Belongs to the sphingomyelin synthase family.

The protein localises to the golgi apparatus membrane. It carries out the reaction an N-acylsphing-4-enine + a 1,2-diacyl-sn-glycero-3-phosphocholine = a sphingomyelin + a 1,2-diacyl-sn-glycerol. It catalyses the reaction an N-acyl-15-methylhexadecasphing-4-enine + a 1,2-diacyl-sn-glycero-3-phosphocholine = an N-acyl-15-methylhexadecasphing-4-enine-1-phosphocholine + a 1,2-diacyl-sn-glycerol. Its pathway is lipid metabolism; sphingolipid metabolism. Sphingomyelin synthases (SM synthase or SMS) synthesize the sphingolipid sphingomyelin (SM) through transfer of the phosphatidyl head group of 1,2-diacyl-sn-glycero-3-phosphocholine (phosphatidylcholine, PC) on to the primary hydroxyl of ceramide (N-acylsphingoid base), yielding 1,2-diacyl-sn-glycerol (diacylglycerol, DAG) as a side product. Functions as a bidirectional lipid cholinephosphotransferases capable of converting PC and ceramide to SM and DAG and vice versa depending on the respective levels of ceramide and DAG as phosphocholine acceptors, respectively. The chain is Phosphatidylcholine:ceramide cholinephosphotransferase 1 (sms-1) from Caenorhabditis elegans.